The following is a 722-amino-acid chain: Glycine--tRNA ligase beta subunit (722 aa).

Belongs to the class-II aminoacyl-tRNA synthetase family. In terms of assembly, tetramer of two alpha and two beta subunits.

It localises to the cytoplasm. It carries out the reaction tRNA(Gly) + glycine + ATP = glycyl-tRNA(Gly) + AMP + diphosphate. The sequence is that of Glycine--tRNA ligase beta subunit from Xylella fastidiosa (strain Temecula1 / ATCC 700964).